We begin with the raw amino-acid sequence, 141 residues long: VLSPADKTNVKSTWDKIGGHAGEYGGEALERTFASFPTTKTYFPHFDLSHGSAQVKAHGKKVADALTNAVAHMDDLPGALSALSDLHAYKLRVDPVNFKLLSHCLLVTLACHHPAEFTPAVHASLDKFFSAVSTVLTSKYR.

One can recognise a Globin domain in the interval 1–141 (VLSPADKTNV…VSTVLTSKYR (141 aa)). Residue serine 3 is modified to Phosphoserine. An N6-succinyllysine modification is found at lysine 7. The residue at position 8 (threonine 8) is a Phosphothreonine. Lysine 11 is subject to N6-succinyllysine. At lysine 16 the chain carries N6-acetyllysine; alternate. At lysine 16 the chain carries N6-succinyllysine; alternate. Tyrosine 24 carries the post-translational modification Phosphotyrosine. Serine 35 carries the post-translational modification Phosphoserine. Lysine 40 is modified (N6-succinyllysine). A Phosphoserine modification is found at serine 49. Histidine 58 contacts O2. Histidine 87 provides a ligand contact to heme b. Serine 102 carries the phosphoserine modification. Position 108 is a phosphothreonine (threonine 108). At serine 124 the chain carries Phosphoserine. A phosphothreonine mark is found at threonine 134 and threonine 137. Phosphoserine is present on serine 138.

The protein belongs to the globin family. In terms of assembly, heterotetramer of two alpha chains and two beta chains. Red blood cells.

Its function is as follows. Involved in oxygen transport from the lung to the various peripheral tissues. This chain is Hemoglobin subunit alpha-1/2, found in Mustela putorius (European polecat).